We begin with the raw amino-acid sequence, 428 residues long: Oxysterol-binding protein 9 (428 aa).

The segment covering 1 to 11 (MTEVQSITTSG) has biased composition (polar residues). Disordered regions lie at residues 1–32 (MTEV…STTN) and 396–428 (ALIE…KNQK). Residues 18–32 (SPSSSSSSISSSTTN) show a composition bias toward low complexity. The stretch at 389-422 (EEAKKYKALIEDNQRKQKKEKDEKLKKDEKLKKE) forms a coiled coil.

The protein belongs to the OSBP family.

The protein is Oxysterol-binding protein 9 (osbI) of Dictyostelium discoideum (Social amoeba).